A 55-amino-acid chain; its full sequence is Protein CADMIUM TOLERANCE 1 (55 aa).

The chain crosses the membrane as a helical span at residues Gly24–Tyr40.

It belongs to the CYSTM1 family.

It localises to the cell membrane. The protein resides in the secreted. It is found in the cell wall. Confers resistance to heavy metal ions (e.g. cadmium (CdCl(2)) and copper (CuCl(2))) by chelating them at the plasma membrane of root cells, thus stopping their entry and reducing their accumulation. Binds to aluminium (Al). The sequence is that of Protein CADMIUM TOLERANCE 1 from Oryza sativa subsp. indica (Rice).